The chain runs to 465 residues: ATP synthase subunit beta (465 aa).

148–155 lines the ATP pocket; it reads GGAGVGKT.

The protein belongs to the ATPase alpha/beta chains family. F-type ATPases have 2 components, CF(1) - the catalytic core - and CF(0) - the membrane proton channel. CF(1) has five subunits: alpha(3), beta(3), gamma(1), delta(1), epsilon(1). CF(0) has three main subunits: a(1), b(2) and c(9-12). The alpha and beta chains form an alternating ring which encloses part of the gamma chain. CF(1) is attached to CF(0) by a central stalk formed by the gamma and epsilon chains, while a peripheral stalk is formed by the delta and b chains.

It is found in the cell inner membrane. It carries out the reaction ATP + H2O + 4 H(+)(in) = ADP + phosphate + 5 H(+)(out). Functionally, produces ATP from ADP in the presence of a proton gradient across the membrane. The catalytic sites are hosted primarily by the beta subunits. The polypeptide is ATP synthase subunit beta (Neisseria meningitidis serogroup C (strain 053442)).